The sequence spans 466 residues: Gamma-glutamylpolyamine synthetase GlnA3 (466 aa).

In terms of domain architecture, GS catalytic spans 127–466 (GRTVLRRIVA…GVAAAYRWKY (340 aa)). 2 residues coordinate Mg(2+): E151 and E153. E202 contributes to the ATP binding site. Mg(2+) is bound by residues E207 and E214. G259 lines the L-glutamate pocket. H263 provides a ligand contact to Mg(2+). Position 267 (S267) interacts with ATP. The L-glutamate site is built by R316 and R334. 2 residues coordinate ATP: R334 and R339. A Mg(2+)-binding site is contributed by E355.

The protein belongs to the glutamine synthetase family. The cofactor is Mg(2+). Expressed in mycelium.

It carries out the reaction spermine + L-glutamate + ATP = gamma-L-glutamylspermine + ADP + phosphate + H(+). It catalyses the reaction spermidine + L-glutamate + ATP = gamma-L-glutamylspermidine + ADP + phosphate + H(+). The enzyme catalyses putrescine + L-glutamate + ATP = gamma-L-glutamylputrescine + ADP + phosphate + H(+). The catalysed reaction is cadaverine + L-glutamate + ATP = gamma-L-glutamylcadaverine + ADP + phosphate + H(+). Its pathway is amine and polyamine degradation; putrescine degradation. It participates in amine and polyamine degradation; spermidine degradation. It functions in the pathway amine and polyamine degradation; spermine degradation. Involved in the catabolism of polyamines. Catalyzes the ATP-dependent gamma-glutamylation of polyamines. Substrates include putrescine, cadaverine, spermidine and spermine, with a preference for long-chain polyamines spermidine and spermine. Is not able to compensate for the loss of glutamine synthetases (GSs). No complementation of the L-glutamine auxotrophy of an E.coli glnA mutant. Involved in morphological differentiation and in the production of secondary metabolites. Together with GlnA2, enables survival of S.coelicolor under exposure to high local environmental polyamine concentrations, which is toxic to the cells. This is Gamma-glutamylpolyamine synthetase GlnA3 from Streptomyces coelicolor (strain ATCC BAA-471 / A3(2) / M145).